Here is a 133-residue protein sequence, read N- to C-terminus: Putative nickel-responsive regulator (133 aa).

Ni(2+) is bound by residues His74, His85, His87, and Cys93.

The protein belongs to the transcriptional regulatory CopG/NikR family. Ni(2+) serves as cofactor.

Transcriptional regulator. The chain is Putative nickel-responsive regulator from Saccharolobus islandicus (strain Y.N.15.51 / Yellowstone #2) (Sulfolobus islandicus).